The chain runs to 202 residues: Large ribosomal subunit protein uL4 (202 aa).

The segment covering 42–52 (GTKAQKSRSQV) has biased composition (polar residues). The disordered stretch occupies residues 42-70 (GTKAQKSRSQVSGTTKKSKKQKGGGARHG).

This sequence belongs to the universal ribosomal protein uL4 family. As to quaternary structure, part of the 50S ribosomal subunit.

In terms of biological role, one of the primary rRNA binding proteins, this protein initially binds near the 5'-end of the 23S rRNA. It is important during the early stages of 50S assembly. It makes multiple contacts with different domains of the 23S rRNA in the assembled 50S subunit and ribosome. Forms part of the polypeptide exit tunnel. This is Large ribosomal subunit protein uL4 from Xylella fastidiosa (strain Temecula1 / ATCC 700964).